The following is a 245-amino-acid chain: tRNA pseudouridine synthase A 2 (245 aa).

D53 functions as the Nucleophile in the catalytic mechanism. Y111 serves as a coordination point for substrate.

This sequence belongs to the tRNA pseudouridine synthase TruA family. As to quaternary structure, homodimer.

It carries out the reaction uridine(38/39/40) in tRNA = pseudouridine(38/39/40) in tRNA. In terms of biological role, formation of pseudouridine at positions 38, 39 and 40 in the anticodon stem and loop of transfer RNAs. In Bacillus cereus (strain ATCC 14579 / DSM 31 / CCUG 7414 / JCM 2152 / NBRC 15305 / NCIMB 9373 / NCTC 2599 / NRRL B-3711), this protein is tRNA pseudouridine synthase A 2.